The chain runs to 31 residues: Aspartate racemase (31 aa).

A disordered region spans residues 1-31 (PVAPEYLFKKEEDKGANKEEEEVAPELGIRA). The segment covering 7–18 (LFKKEEDKGANK) has biased composition (basic and acidic residues).

It belongs to the aspartate/glutamate racemases family. It depends on pyridoxal 5'-phosphate as a cofactor.

It carries out the reaction L-aspartate = D-aspartate. Its activity is regulated as follows. Inhibited by hydroxylamine, aminooxyacetate, phenylhydrazine and sodium borohydride. In terms of biological role, highly specific toward aspartate and entirely inactive on glutamate, alanine and serine. The sequence is that of Aspartate racemase from Anadara broughtonii (Blood clam).